The primary structure comprises 726 residues: MKSKERKSRKRWITDWWPNRLNLKILRQNCSDSNPYGSDYDYLKEVKTLDVDAVIEDLKKLMKTSQDWWPADFGHYGPLFIRLSWHSAGSYRIHDGRGGAKNGSIRFPARINWPDNINLDKAIRLLWPIKKKYGKKLSWADLIILAGTVALQDMGVKILGFSLGREDVFEADESPDWGAEQEMLSGKERFKEGELEKPFAATEMGLIYVNPEGPMGNPDPSGSAKEIRLAFTRMGMNDEETVALIAGGHSFGKCHGAGPSKDLGPDPSSSPIEQMGLGWKYTYKTGKASDTYTSGFEVIWSSKPTKFGIQYLKFLLEFEWELEKSPDGKNQWVAKNAPEMIPDPFDPNKKHKPRMLTADLALKFDPIYSKIAKKFLENPEEFEKAFAWAWFKLTHRDMGPKSCYIGPYVPREEFIWQDPLPKRDYELIDEEDIEYLKKQILNSGINISQLVYTAWSSASTYRDSDRRGGANGARIRLRPMNLWEVNHPDDLIKIIKVYEKIQKNFNEEQKNNKKVSIADLIVLGGCAAIESAAKKAGFDIRVPFIPGRVDALQDQVEEEFYREIEPFADGFRNYFKDPYKIDESDISTTPEYFLIDKAQLLKLTVPELVVIVGGLRVLGAVYSYKNYGVLTHTVGTLTNDFFVNLLDMNIEWKQIDEHRYLFEGFNRKTKEPEFKATRVDLIFAHHDELRAVAEVYASDDEKEKFVSDFIKTWDKVMTLDRFDLKV.

The tryptophyl-tyrosyl-methioninium (Trp-Tyr) (with M-234) cross-link spans 85-208 (WHSAGSYRIH…FAATEMGLIY (124 aa)). His-86 functions as the Proton acceptor in the catalytic mechanism. Residues 208 to 234 (YVNPEGPMGNPDPSGSAKEIRLAFTRM) constitute a cross-link (tryptophyl-tyrosyl-methioninium (Tyr-Met) (with W-85)). Position 249 (His-249) interacts with heme b.

Belongs to the peroxidase family. Peroxidase/catalase subfamily. Homodimer or homotetramer. Requires heme b as cofactor. In terms of processing, formation of the three residue Trp-Tyr-Met cross-link is important for the catalase, but not the peroxidase activity of the enzyme.

It carries out the reaction H2O2 + AH2 = A + 2 H2O. It catalyses the reaction 2 H2O2 = O2 + 2 H2O. Bifunctional enzyme with both catalase and broad-spectrum peroxidase activity. The sequence is that of Catalase-peroxidase from Pseudothermotoga lettingae (strain ATCC BAA-301 / DSM 14385 / NBRC 107922 / TMO) (Thermotoga lettingae).